The following is a 365-amino-acid chain: Aminomethyltransferase (365 aa).

It belongs to the GcvT family. In terms of assembly, the glycine cleavage system is composed of four proteins: P, T, L and H.

The enzyme catalyses N(6)-[(R)-S(8)-aminomethyldihydrolipoyl]-L-lysyl-[protein] + (6S)-5,6,7,8-tetrahydrofolate = N(6)-[(R)-dihydrolipoyl]-L-lysyl-[protein] + (6R)-5,10-methylene-5,6,7,8-tetrahydrofolate + NH4(+). Functionally, the glycine cleavage system catalyzes the degradation of glycine. The protein is Aminomethyltransferase of Serratia proteamaculans (strain 568).